Reading from the N-terminus, the 769-residue chain is Protein transport protein sec39 (769 aa).

This sequence belongs to the SEC39 family. In terms of assembly, component of a peripheral membrane protein complex consisting of dsl1, sec39 and tip20.

The protein resides in the endoplasmic reticulum membrane. In terms of biological role, required for protein transport between the Golgi and the endoplasmic reticulum. May contribute to tethering of coatomer-coated retrograde transport vesicles to the ER membrane through interaction with and stabilization of the SNARE complex. The protein is Protein transport protein sec39 of Schizosaccharomyces pombe (strain 972 / ATCC 24843) (Fission yeast).